Reading from the N-terminus, the 472-residue chain is Methanethiol oxidase (472 aa).

Alanine 2 is modified (N-acetylalanine). Residues serine 111, serine 371, and serine 467 each carry the phosphoserine modification.

Belongs to the selenium-binding protein family. Interacts with USP33. Phosphorylated. Post-translationally, the N-terminus is blocked. In terms of tissue distribution, widely expressed. Highly expressed in liver, lung, colon, prostate, kidney and pancreas. In brain, present both in neurons and glia (at protein level). Down-regulated in lung adenocarcinoma, colorectal carcinoma and ovarian cancer. Two-fold up-regulated in brain and blood from schizophrenia patients.

The protein resides in the nucleus. It is found in the cytoplasm. Its subcellular location is the cytosol. The protein localises to the membrane. It catalyses the reaction methanethiol + O2 + H2O = hydrogen sulfide + formaldehyde + H2O2 + H(+). The protein operates within organosulfur degradation. In terms of biological role, catalyzes the oxidation of methanethiol, an organosulfur compound known to be produced in substantial amounts by gut bacteria. Selenium-binding protein which may be involved in the sensing of reactive xenobiotics in the cytoplasm. May be involved in intra-Golgi protein transport. The protein is Methanethiol oxidase (SELENBP1) of Homo sapiens (Human).